The following is a 121-amino-acid chain: Large ribosomal subunit protein bL12 (121 aa).

The protein belongs to the bacterial ribosomal protein bL12 family. Homodimer. Part of the ribosomal stalk of the 50S ribosomal subunit. Forms a multimeric L10(L12)X complex, where L10 forms an elongated spine to which 2 to 4 L12 dimers bind in a sequential fashion. Binds GTP-bound translation factors.

Its function is as follows. Forms part of the ribosomal stalk which helps the ribosome interact with GTP-bound translation factors. Is thus essential for accurate translation. This is Large ribosomal subunit protein bL12 from Shewanella baltica (strain OS223).